The following is a 660-amino-acid chain: Pro-secreted protein ORF2 (660 aa).

An N-terminal signal peptide occupies residues 1 to 23; the sequence is MRPRAVLLLLFVLLPMLPAPPAG. 2 disordered regions span residues 19–43 and 64–125; these read APPA…GFWG and ADVV…VPDV. A Nuclear localization signal motif is present at residues 28–33; the sequence is RRRGRR. Over residues 93–124 the composition is skewed to low complexity; the sequence is RPSTAPRRRSAPAGAAPLTAVSPAPDTAPVPD. N137 and N310 each carry an N-linked (GlcNAc...) asparagine; by host glycan. Residues 368–394 are particle formation; it reads IALTLFNLADTLLGGLPTELISSAGGQ. N562 is a glycosylation site (N-linked (GlcNAc...) asparagine; by host). Residues 585 to 610 are oligomerization; sequence TTSLGAGPTSISAVGVLAPHSALAVL.

It belongs to the hepevirus capsid protein family. As to quaternary structure, homodimer. Self-assembles to form the capsid. The capsid is dominated by dimers that define the 30 morphological units. Interacts with phosphorylated protein ORF3. Interacts with host TMEM134. Interacts with host ASGR1 and ASGR2; these interactions facilitate infection of host hepatocytes. Cleaved by host protease in the N-terminus. In terms of processing, N-glycosylated. Post-translationally, not N-glycosylated. The C-terminus of the capsid protein ORF2 is truncated in non-enveloped virions shedded in feces, probably due to host proteases.

Its subcellular location is the secreted. The protein localises to the virion. The protein resides in the host cytoplasm. It is found in the host endoplasmic reticulum. It localises to the host Golgi apparatus. Its subcellular location is the host cell surface. The protein localises to the host nucleus. In terms of biological role, plays a role in the inhibition of host antibody-mediated neutralization without blocking viral cell entry. Its function is as follows. Forms an icosahedral capsid with a T=1 symmetry and a 34 nm diameter. The capsid is composed of 60 copies linked to each other. Binds to the 5' end of the genomic RNA to mediate genome encapsidation. Binds to heparin surface proteoglycans (HSPGs) to mediate viral entry. Additionally, the interactions with host ASGR1 and ASGR2 facilitate viral infection of hepatocytes. Inhibits IFN production by blocking host TBK1-induced IRF3 phosphorylation. The nuclear form probably modulates host gene expression. This is Pro-secreted protein ORF2 from Hepatitis E virus genotype 3 (isolate Swine/United States/swUS1) (HEV-3).